Here is a 359-residue protein sequence, read N- to C-terminus: Serine/threonine-protein kinase mos (359 aa).

The Protein kinase domain maps to 63-336; sequence VLLLEPLGSG…LLERLEQECA (274 aa). ATP is bound by residues 69–77 and Lys90; that span reads LGSGGFGSV. Residue Asp189 is the Proton acceptor of the active site.

The protein belongs to the protein kinase superfamily. Ser/Thr protein kinase family.

The protein localises to the cytoplasm. The enzyme catalyses L-seryl-[protein] + ATP = O-phospho-L-seryl-[protein] + ADP + H(+). It carries out the reaction L-threonyl-[protein] + ATP = O-phospho-L-threonyl-[protein] + ADP + H(+). Its function is as follows. Serine/threonine kinase involved in the regulation of MAPK signaling. The chain is Serine/threonine-protein kinase mos (mos) from Xenopus laevis (African clawed frog).